Consider the following 208-residue polypeptide: Pyrophosphate-energized proton pump 2 (208 aa).

5 helical membrane-spanning segments follow: residues 19-39 (AYPL…TFFV), 54-74 (GLIV…SFTI), 89-109 (GGNL…IVVI), 140-160 (LAVS…GIIA), and 167-187 (LFGT…IVAL).

The protein belongs to the H(+)-translocating pyrophosphatase (TC 3.A.10) family. Homodimer. Mg(2+) serves as cofactor.

It is found in the cell inner membrane. The catalysed reaction is diphosphate + H2O + H(+)(in) = 2 phosphate + 2 H(+)(out). Proton pump that utilizes the energy of pyrophosphate hydrolysis as the driving force for proton movement across the membrane. Generates a proton motive force. The sequence is that of Pyrophosphate-energized proton pump 2 (hppA2) from Mycoplana dimorpha.